A 252-amino-acid chain; its full sequence is 3-dehydroquinate dehydratase (252 aa).

3-dehydroquinate-binding positions include Ser21, 46–48 (EWR), and Arg82. Residue His143 is the Proton donor/acceptor of the active site. Residue Lys170 is the Schiff-base intermediate with substrate of the active site. 3-dehydroquinate contacts are provided by Arg213, Ser232, and Gln236.

It belongs to the type-I 3-dehydroquinase family. In terms of assembly, homodimer.

It carries out the reaction 3-dehydroquinate = 3-dehydroshikimate + H2O. Its pathway is metabolic intermediate biosynthesis; chorismate biosynthesis; chorismate from D-erythrose 4-phosphate and phosphoenolpyruvate: step 3/7. Involved in the third step of the chorismate pathway, which leads to the biosynthesis of aromatic amino acids. Catalyzes the cis-dehydration of 3-dehydroquinate (DHQ) and introduces the first double bond of the aromatic ring to yield 3-dehydroshikimate. The protein is 3-dehydroquinate dehydratase of Escherichia coli (strain SE11).